The sequence spans 700 residues: AP-2 complex subunit beta (700 aa).

Residues 625-700 form a disordered region; it reads VGNSFPPTGA…RKLSMKRPFS (76 aa). Residue Ser649 is modified to Phosphoserine. Thr652 bears the Phosphothreonine mark. A compositionally biased stretch (basic and acidic residues) spans 653–663; that stretch reads AMMDDYDKPAE. Residue Ser683 is modified to Phosphoserine.

It belongs to the adaptor complexes large subunit family. As to quaternary structure, adaptor protein complex 2 (AP-2) is a heterotetramer composed of two large adaptins (alpha-type subunit APL3 and beta-type subunit APL1), a medium chain (mu-type subunit APM4) and a small adaptin (sigma-type subunit APS2). Interacts with APS2.

Its subcellular location is the cell membrane. It is found in the membrane. It localises to the coated pit. Adaptins are components of the adaptor complexes which link clathrin to receptors in coated vesicles. Clathrin-associated protein complexes are believed to interact with the cytoplasmic tails of membrane proteins, leading to their selection and concentration. Beta adaptin is a subunit of the plasma membrane adaptor. This Saccharomyces cerevisiae (strain ATCC 204508 / S288c) (Baker's yeast) protein is AP-2 complex subunit beta (APL1).